The primary structure comprises 312 residues: MKVAVLGAAGGIGQALALLLKNQLPSGSELSLYDIAPVTPGVAVDLSHIPTAVKIKGFSGEDATPALEGADVVLISAGVARKPGMDRSDLFNVNAGIVKNLVQQIAKTCPKACVGIITNPVNTTVAIAAEVLKKAGVYDKNKLFGVTTLDIIRSNTFVAELKGKLPTEVEVLVIGGHSGVTILPLLSQIPGVSFTEQEAAELTKRIQNAGTEVVEAKAGGGSATLSMGQAAARFGLSLVRALQGEKGVVECAYVEGDGQYARFFSQPLLLGKNGVEERKSIGTLSAFEQHSLDAMLDTLKKDIQLGEDFINK.

NAD(+)-binding positions include 7 to 13 and aspartate 34; that span reads GAAGGIG. Substrate is bound by residues arginine 81 and arginine 87. Residues asparagine 94 and 117 to 119 each bind NAD(+); that span reads ITN. Substrate contacts are provided by asparagine 119 and arginine 153. The Proton acceptor role is filled by histidine 177. Methionine 227 contacts NAD(+).

This sequence belongs to the LDH/MDH superfamily. MDH type 1 family. As to quaternary structure, homodimer.

It carries out the reaction (S)-malate + NAD(+) = oxaloacetate + NADH + H(+). Catalyzes the reversible oxidation of malate to oxaloacetate. This Salmonella choleraesuis (strain SC-B67) protein is Malate dehydrogenase.